A 364-amino-acid chain; its full sequence is Ribosomal RNA small subunit methyltransferase H (364 aa).

Residues 55–57 (GGH), D75, F101, D122, and Q129 contribute to the S-adenosyl-L-methionine site. Residues 333-364 (LPPGGGAGFVKAGRVPGEPVRGTRAGSKGRRR) are disordered.

This sequence belongs to the methyltransferase superfamily. RsmH family.

The protein resides in the cytoplasm. The enzyme catalyses cytidine(1402) in 16S rRNA + S-adenosyl-L-methionine = N(4)-methylcytidine(1402) in 16S rRNA + S-adenosyl-L-homocysteine + H(+). Its function is as follows. Specifically methylates the N4 position of cytidine in position 1402 (C1402) of 16S rRNA. This chain is Ribosomal RNA small subunit methyltransferase H, found in Bordetella bronchiseptica (strain ATCC BAA-588 / NCTC 13252 / RB50) (Alcaligenes bronchisepticus).